A 126-amino-acid chain; its full sequence is Holo-[acyl-carrier-protein] synthase (126 aa).

Residues Asp-9 and Glu-58 each coordinate Mg(2+).

It belongs to the P-Pant transferase superfamily. AcpS family. Mg(2+) serves as cofactor.

It localises to the cytoplasm. The catalysed reaction is apo-[ACP] + CoA = holo-[ACP] + adenosine 3',5'-bisphosphate + H(+). Transfers the 4'-phosphopantetheine moiety from coenzyme A to a Ser of acyl-carrier-protein. The protein is Holo-[acyl-carrier-protein] synthase of Vibrio atlanticus (strain LGP32) (Vibrio splendidus (strain Mel32)).